Consider the following 92-residue polypeptide: Small ribosomal subunit protein uS19 (92 aa).

It belongs to the universal ribosomal protein uS19 family.

In terms of biological role, protein S19 forms a complex with S13 that binds strongly to the 16S ribosomal RNA. In Trichlorobacter lovleyi (strain ATCC BAA-1151 / DSM 17278 / SZ) (Geobacter lovleyi), this protein is Small ribosomal subunit protein uS19.